A 593-amino-acid chain; its full sequence is Uncoordinated protein 58 (593 aa).

6 helical membrane passes run 186–206 (VILVSVLIGYLCLGAWILMLL), 291–311 (TFPTALLYVLTVLTTCGYGEV), 320–340 (VFSVAFALVGIPLMFITAADI), 402–422 (PIGAYVSCICLYCSMGSAMFI), 430–450 (FIHAFHFGFNLIVTVGLGDIV), and 455–475 (IFLSLIVAFVIVGLSVVTMCV).

Belongs to the two pore domain potassium channel (TC 1.A.1.8) family.

It localises to the membrane. Its function is as follows. Has a role in mobility, possibly in the transport of potassium in muscles. This chain is Uncoordinated protein 58, found in Caenorhabditis briggsae.